The sequence spans 389 residues: S-adenosylmethionine synthase (389 aa).

H17 serves as a coordination point for ATP. Mg(2+) is bound at residue D19. Residue E45 coordinates K(+). Residues E58 and Q101 each contribute to the L-methionine site. The interval Q101–E111 is flexible loop. ATP contacts are provided by residues D168–K170, R234–F235, D243, R249–K250, A266, and K270. L-methionine is bound at residue D243. Residue K274 participates in L-methionine binding.

The protein belongs to the AdoMet synthase family. As to quaternary structure, homotetramer; dimer of dimers. Mg(2+) is required as a cofactor. K(+) serves as cofactor.

Its subcellular location is the cytoplasm. It catalyses the reaction L-methionine + ATP + H2O = S-adenosyl-L-methionine + phosphate + diphosphate. It participates in amino-acid biosynthesis; S-adenosyl-L-methionine biosynthesis; S-adenosyl-L-methionine from L-methionine: step 1/1. Its function is as follows. Catalyzes the formation of S-adenosylmethionine (AdoMet) from methionine and ATP. The overall synthetic reaction is composed of two sequential steps, AdoMet formation and the subsequent tripolyphosphate hydrolysis which occurs prior to release of AdoMet from the enzyme. The sequence is that of S-adenosylmethionine synthase from Geotalea uraniireducens (strain Rf4) (Geobacter uraniireducens).